We begin with the raw amino-acid sequence, 579 residues long: MNIRDLLNQRVLAAMATCGVPADLPALIAPGKKAGFGDYQANGAMGAAKAMGTNPRDLAGKIVAALDLEGIADKLEIAGPGFINIYLKPAWLGKQIALAQTDARLAVPQAEHAQTVVIDYSGPNLAKEMHVGHLRSTIIGDSLARLLEFLGHQVIRQNHVGDWGTQFGMLIAELEEQLGAKGDAALELKDLEVFYQQAKKHFDDDAAFADKARDYVVRLQGGDAQMLKLWQQFKDISLHHSSEIYQQLNVTLTDADVRGESFYNDDLAPLVKALQDQGLAVESEGAQVVFLPELADKDGNPSPVIIQKQGGGFLYATTDLAALRYRVNTLNAKRIMYFIDARQSLHMQQVFTISRKAGFVSDAVSLEHLAFGTMMGSDGKPFKTRTGGTVKLAELLSEAVDRAASVVSEKNPELAGEDIAEIARKVGIGAVKYADLCKTRTNDYVFSWESMLSFEGNTAPYLQYAYTRVQSIFRKAGVAPETLGSPILLGSEQEKALAIKLLQFSEVLDQMAREAMPHLLCTYLYDIASLYMSFYEACPILKEGVDAEVRDSRLRLCHLVARTIAQGLGLLGIEVMERM.

The short motif at 123-133 (PNLAKEMHVGH) is the 'HIGH' region element.

It belongs to the class-I aminoacyl-tRNA synthetase family. In terms of assembly, monomer.

The protein resides in the cytoplasm. It carries out the reaction tRNA(Arg) + L-arginine + ATP = L-arginyl-tRNA(Arg) + AMP + diphosphate. This Cellvibrio japonicus (strain Ueda107) (Pseudomonas fluorescens subsp. cellulosa) protein is Arginine--tRNA ligase.